Consider the following 309-residue polypeptide: Serine/threonine-protein phosphatase 2A catalytic subunit beta isoform (309 aa).

Asp57, His59, Asp85, and Asn117 together coordinate Mn(2+). The active-site Proton donor is His118. Mn(2+) is bound by residues His167 and His241. Position 307 is a phosphotyrosine (Tyr307). The residue at position 309 (Leu309) is a Leucine methyl ester.

Belongs to the PPP phosphatase family. PP-1 subfamily. As to quaternary structure, PP2A consists of a common heterodimeric core enzyme (composed of a 36 kDa catalytic subunit (subunit C) and a 65 kDa constant regulatory subunit (PR65) (subunit A)) that associates with a variety of regulatory subunits. Proteins that associate with the core dimer include three families of regulatory subunits B (the R2/B/PR55/B55, R3/B''/PR72/PR130/PR59 and R5/B'/B56 families), the 48 kDa variable regulatory subunit, viral proteins, and cell signaling molecules. Binds PPME1. May indirectly interact with SGO1, most probably through regulatory B56 subunits. Found in a complex with at least ARL2, PPP2CB, PPP2R1A, PPP2R2A, PPP2R5E and TBCD. Interacts with TBCD. Interacts with CTTNBP2NL. Interacts with PTPA. Part of the core of STRIPAK complexes composed of PP2A catalytic and scaffolding subunits, the striatins (PP2A regulatory subunits), the striatin-associated proteins MOB4, STRIP1 and STRIP2, PDCD10 and members of the STE20 kinases, such as STK24 and STK26. Mn(2+) is required as a cofactor. Post-translationally, reversibly methyl esterified on Leu-309 by leucine carboxyl methyltransferase 1 (LCMT1) and protein phosphatase methylesterase 1 (PPME1). Carboxyl methylation influences the affinity of the catalytic subunit for the different regulatory subunits, thereby modulating the PP2A holoenzyme's substrate specificity, enzyme activity and cellular localization. In terms of processing, phosphorylation of either threonine (by autophosphorylation-activated protein kinase) or tyrosine results in inactivation of the phosphatase. Auto-dephosphorylation has been suggested as a mechanism for reactivation. May be monoubiquitinated by NOSIP.

The protein resides in the cytoplasm. It localises to the nucleus. The protein localises to the chromosome. Its subcellular location is the centromere. It is found in the cytoskeleton. The protein resides in the spindle pole. It carries out the reaction O-phospho-L-seryl-[protein] + H2O = L-seryl-[protein] + phosphate. The enzyme catalyses O-phospho-L-threonyl-[protein] + H2O = L-threonyl-[protein] + phosphate. Catalytic subunit of protein phosphatase 2A (PP2A), a serine/threonine phosphatase involved in the regulation of a wide variety of enzymes, signal transduction pathways, and cellular events. PP2A can modulate the activity of phosphorylase B kinase, casein kinase 2, mitogen-stimulated S6 kinase, and MAP-2 kinase. Part of the striatin-interacting phosphatase and kinase (STRIPAK) complexes. STRIPAK complexes have critical roles in protein (de)phosphorylation and are regulators of multiple signaling pathways including Hippo, MAPK, nuclear receptor and cytoskeleton remodeling. Different types of STRIPAK complexes are involved in a variety of biological processes such as cell growth, differentiation, apoptosis, metabolism and immune regulation. This chain is Serine/threonine-protein phosphatase 2A catalytic subunit beta isoform (PPP2CB), found in Bos taurus (Bovine).